A 297-amino-acid polypeptide reads, in one-letter code: Formylmethanofuran--tetrahydromethanopterin formyltransferase (297 aa).

It belongs to the FTR family. As to quaternary structure, homotetramer.

The protein localises to the cytoplasm. It catalyses the reaction N-formylmethanofuran + 5,6,7,8-tetrahydromethanopterin + H(+) = N(5)-formyl-5,6,7,8-tetrahydromethanopterin + methanofuran. It participates in one-carbon metabolism; methanogenesis from CO(2); 5,10-methenyl-5,6,7,8-tetrahydromethanopterin from CO(2): step 2/3. Its function is as follows. Catalyzes the reversible transfer of a formyl group from formylmethanofuran (formyl-MFR) to tetrahydromethanopterin (H(4)MPT) to produce 5-formyl tetrahydromethanopterin (5-formyl-H(4)MPT) and methanofuran (MFR). This is Formylmethanofuran--tetrahydromethanopterin formyltransferase from Methanosarcina barkeri (strain Fusaro / DSM 804).